We begin with the raw amino-acid sequence, 431 residues long: Polygalacturonase ADPG1 (431 aa).

Positions 1 to 23 are cleaved as a signal peptide; sequence MARCCRHLAVFLCVLLMLSLCKA. PbH1 repeat units lie at residues 223–249 and 250–271; these read CNKV…HITN and TQNI…SIED. Residue aspartate 264 is the Proton donor of the active site. Histidine 287 is a catalytic residue. 3 PbH1 repeats span residues 303–324, 332–353, and 398–420; these read VSGI…RIKT, AKNI…IIDQ, and CQGI…NANV.

It belongs to the glycosyl hydrolase 28 family. In terms of tissue distribution, expressed in flower buds and siliques, in the dehiscence zone of anthers (stomium cells) and maturing siliques. Expressed in stigma during pollen tube growth. Not expressed in seeds or in the floral part or leaf abscission zone but found at the junction between the seed and the funiculus at the site of seed abscission.

Its subcellular location is the secreted. The protein localises to the cell wall. It localises to the cytoplasm. It catalyses the reaction (1,4-alpha-D-galacturonosyl)n+m + H2O = (1,4-alpha-D-galacturonosyl)n + (1,4-alpha-D-galacturonosyl)m.. Functionally, polygalacturonase involved in cell separation in the final stages of pod shatter and in anther dehiscence. Not involved in floral organ abscission. This is Polygalacturonase ADPG1 (ADPG1) from Arabidopsis thaliana (Mouse-ear cress).